A 171-amino-acid polypeptide reads, in one-letter code: Superoxide dismutase [Cu-Zn] 2 (171 aa).

The first 20 residues, 1-20 (MKKLSGVLAGSLLLISASFS), serve as a signal peptide directing secretion. His67, His69, and His85 together coordinate Cu cation. Residues Cys74 and Cys167 are joined by a disulfide bond. Residues His85, His93, His102, and Asp105 each contribute to the Zn(2+) site. His147 is a Cu cation binding site.

Belongs to the Cu-Zn superoxide dismutase family. Cu cation is required as a cofactor. It depends on Zn(2+) as a cofactor.

It catalyses the reaction 2 superoxide + 2 H(+) = H2O2 + O2. Destroys radicals which are normally produced within the cells and which are toxic to biological systems. This is Superoxide dismutase [Cu-Zn] 2 (sodC2) from Aquifex aeolicus (strain VF5).